The sequence spans 706 residues: Transferrin-binding protein B (706 aa).

An N-terminal signal peptide occupies residues 1–20; it reads MKHIPLTTLCVAISAVLLTA. Residue C21 is the site of N-palmitoyl cysteine attachment. C21 carries S-diacylglycerol cysteine lipidation. Disordered regions lie at residues 26–92 and 384–412; these read GSNP…KEQV and GSAIASDKEKDSETKHPFTSDAKDRLEGG. Over residues 42-51 the composition is skewed to gly residues; that stretch reads GNTGNTGNAG. Basic and acidic residues predominate over residues 389–410; it reads SDKEKDSETKHPFTSDAKDRLE.

Belongs to the TbpB family.

The protein localises to the cell outer membrane. The protein resides in the cell surface. Functionally, moraxella acquires iron by extracting it from serum transferrin (TF) in its human host. Acts as a transferrin receptor and is required for transferrin utilization. In Moraxella catarrhalis (Branhamella catarrhalis), this protein is Transferrin-binding protein B.